The chain runs to 314 residues: Nodulation protein D 1 (314 aa).

The 58-residue stretch at leucine 6 to threonine 63 folds into the HTH lysR-type domain. The segment at residues leucine 23–alanine 42 is a DNA-binding region (H-T-H motif).

This sequence belongs to the LysR transcriptional regulatory family.

In terms of biological role, nodD regulates the expression of the nodABCFE genes which encode other nodulation proteins. NodD is also a negative regulator of its own expression. Binds flavonoids as inducers. The chain is Nodulation protein D 1 (nodD1) from Bradyrhizobium diazoefficiens (strain JCM 10833 / BCRC 13528 / IAM 13628 / NBRC 14792 / USDA 110).